The following is a 251-amino-acid chain: Aspartate/glutamate leucyltransferase (251 aa).

Belongs to the R-transferase family. Bpt subfamily.

Its subcellular location is the cytoplasm. It carries out the reaction N-terminal L-glutamyl-[protein] + L-leucyl-tRNA(Leu) = N-terminal L-leucyl-L-glutamyl-[protein] + tRNA(Leu) + H(+). The catalysed reaction is N-terminal L-aspartyl-[protein] + L-leucyl-tRNA(Leu) = N-terminal L-leucyl-L-aspartyl-[protein] + tRNA(Leu) + H(+). Its function is as follows. Functions in the N-end rule pathway of protein degradation where it conjugates Leu from its aminoacyl-tRNA to the N-termini of proteins containing an N-terminal aspartate or glutamate. This Xanthomonas oryzae pv. oryzae (strain KACC10331 / KXO85) protein is Aspartate/glutamate leucyltransferase.